The primary structure comprises 400 residues: NADH-quinone oxidoreductase subunit D (400 aa).

Belongs to the complex I 49 kDa subunit family. In terms of assembly, NDH-1 is composed of 14 different subunits. Subunits NuoB, C, D, E, F, and G constitute the peripheral sector of the complex.

Its subcellular location is the cell inner membrane. The enzyme catalyses a quinone + NADH + 5 H(+)(in) = a quinol + NAD(+) + 4 H(+)(out). NDH-1 shuttles electrons from NADH, via FMN and iron-sulfur (Fe-S) centers, to quinones in the respiratory chain. The immediate electron acceptor for the enzyme in this species is believed to be a menaquinone. Couples the redox reaction to proton translocation (for every two electrons transferred, four hydrogen ions are translocated across the cytoplasmic membrane), and thus conserves the redox energy in a proton gradient. The polypeptide is NADH-quinone oxidoreductase subunit D (Pelodictyon phaeoclathratiforme (strain DSM 5477 / BU-1)).